We begin with the raw amino-acid sequence, 266 residues long: DNA-directed RNA polymerase subunit Rpo3 (266 aa).

[3Fe-4S] cluster is bound by residues Cys205, Cys208, and Cys211.

This sequence belongs to the archaeal Rpo3/eukaryotic RPB3 RNA polymerase subunit family. Part of the RNA polymerase complex. [3Fe-4S] cluster is required as a cofactor.

It is found in the cytoplasm. The enzyme catalyses RNA(n) + a ribonucleoside 5'-triphosphate = RNA(n+1) + diphosphate. Functionally, DNA-dependent RNA polymerase (RNAP) catalyzes the transcription of DNA into RNA using the four ribonucleoside triphosphates as substrates. The chain is DNA-directed RNA polymerase subunit Rpo3 from Methanosarcina acetivorans (strain ATCC 35395 / DSM 2834 / JCM 12185 / C2A).